Here is a 349-residue protein sequence, read N- to C-terminus: Dehydrogenase FPY6 (349 aa).

It belongs to the Gfo/Idh/MocA family.

Its pathway is secondary metabolite biosynthesis. Dehydrogenase; part of the gene cluster that mediates the biosynthesis of the gamma-pyrones fusapyrone (FPY) and deoxyfusapyrone (dFPY). FPY is an undecaketide and thus likely synthesized by the polyketide synthase FPY1 from acetyl-CoA functioning as starter unit and the addition of 10 malonyl-CoA extender units by successive Claisen-condensations. Next to this, FPY shares some rare features: C-glycosylated 4-deoxyglucose at C-3, a gem-dimethyl group at C-13, and an alpha-beta to beta-gamma double bond shift at C-20. During FPY biosynthesis mono-C-methyl groups are transferred to the tetra-, penta-, hexa- and heptaketide, while two C-methyl groups are transferred to the nonaketide, suggesting that the CMet domain is programmed to selectively catalyze two successive C-alpha-methylation reactions of the nonaketide, while other alpha-carbons are non- or mono-methylated only. While the origin of the 4'-deoxyglucose moiety remains opaque, its transfer to C-3 is most likely mediated by the C-glycosyltransferase FPY2. Next to this, the hydroxyl group present at C-33 and discriminating between FPY and dFPY, is likely to be installed by the cytochrome P450 monooxygenase FPY7. No putative function can be predicted for the remaining genes FPY3-FPY6. The chain is Dehydrogenase FPY6 from Fusarium mangiferae (Mango malformation disease fungus).